We begin with the raw amino-acid sequence, 422 residues long: Interleukin-11 receptor subunit alpha (422 aa).

The first 22 residues, 1–22 (MSSSCSGLSRVLVAVATALVSA), serve as a signal peptide directing secretion. The Extracellular portion of the chain corresponds to 24-370 (SPCPQAWGPP…DSVEQVAVLA (347 aa)). The region spanning 27-110 (PQAWGPPGVQ…LGGTVTLQLG (84 aa)) is the Ig-like C2-type domain. 3 cysteine pairs are disulfide-bonded: Cys48–Cys94, Cys120–Cys130, and Cys170–Cys180. Fibronectin type-III domains lie at 112-219 (PPAR…LRPD) and 220-317 (PPQG…TPST). Residue Asn127 is glycosylated (N-linked (GlcNAc...) asparagine). Asn194 carries N-linked (GlcNAc...) asparagine glycosylation. The WSXWS motif motif lies at 304–308 (WSTWS). The disordered stretch occupies residues 335 to 355 (EVEPQVDSPAPPRPSLQPHPR). A helical membrane pass occupies residues 371 to 391 (SLGILSFLGLVAGALALGLWL). Over 392 to 422 (RLRRGGKDGSPKPGFLASVIPVDRRPGAPNL) the chain is Cytoplasmic. The tract at residues 398-422 (KDGSPKPGFLASVIPVDRRPGAPNL) is disordered. Residues 413 to 422 (VDRRPGAPNL) are compositionally biased toward basic and acidic residues.

It belongs to the type I cytokine receptor family. Type 3 subfamily. As to quaternary structure, on IL11 binding, forms a multimer complex with IL6ST/gp130. A short soluble form is also released from the membrane by proteolysis. The sIL11RA is formed either by limited proteolysis of membrane-bound receptors, a process referred to as ectodomain shedding, or directly secreted from the cells after alternative mRNA splicing. mIL11RA is cleaved by the proteases ADAM10, ELANE and PRTN3. As to expression, expressed in a number of cell lines, including the myelogenous leukemia cell line K-562, the megakaryocytic leukemia cell line M-07e, the erythroleukemia cell line TF-1, and the osteosarcoma cell lines, MG-63 and SaOS-2. Also expressed in normal and malignant prostate epithelial cell lines. Expression levels are increased in prostate carcinoma.

It localises to the membrane. It is found in the secreted. Functionally, receptor for interleukin-11 (IL11). The receptor systems for IL6, LIF, OSM, CNTF, IL11 and CT1 can utilize IL6ST for initiating signal transmission. The IL11/IL11RA/IL6ST complex may be involved in the control of proliferation and/or differentiation of skeletogenic progenitor or other mesenchymal cells. Essential for the normal development of craniofacial bones and teeth. Restricts suture fusion and tooth number. In terms of biological role, soluble form of IL11 receptor (sIL11RA) that acts as an agonist of IL11 activity. The IL11:sIL11RA complex binds to IL6ST/gp130 on cell surfaces and induces signaling also on cells that do not express membrane-bound IL11RA in a process called IL11 trans-signaling. The protein is Interleukin-11 receptor subunit alpha of Homo sapiens (Human).